We begin with the raw amino-acid sequence, 317 residues long: Acetyl-coenzyme A carboxylase carboxyl transferase subunit alpha (317 aa).

The 262-residue stretch at 33–294 folds into the CoA carboxyltransferase C-terminal domain; that stretch reads NLDDEITRLQ…KKRLLADLAD (262 aa).

This sequence belongs to the AccA family. Acetyl-CoA carboxylase is a heterohexamer composed of biotin carboxyl carrier protein (AccB), biotin carboxylase (AccC) and two subunits each of ACCase subunit alpha (AccA) and ACCase subunit beta (AccD).

The protein localises to the cytoplasm. The catalysed reaction is N(6)-carboxybiotinyl-L-lysyl-[protein] + acetyl-CoA = N(6)-biotinyl-L-lysyl-[protein] + malonyl-CoA. The protein operates within lipid metabolism; malonyl-CoA biosynthesis; malonyl-CoA from acetyl-CoA: step 1/1. Functionally, component of the acetyl coenzyme A carboxylase (ACC) complex. First, biotin carboxylase catalyzes the carboxylation of biotin on its carrier protein (BCCP) and then the CO(2) group is transferred by the carboxyltransferase to acetyl-CoA to form malonyl-CoA. This Histophilus somni (strain 129Pt) (Haemophilus somnus) protein is Acetyl-coenzyme A carboxylase carboxyl transferase subunit alpha.